Consider the following 175-residue polypeptide: Small ribosomal subunit protein uS7 (175 aa).

It belongs to the universal ribosomal protein uS7 family. In terms of assembly, part of the 30S ribosomal subunit. Contacts proteins S9 and S11.

One of the primary rRNA binding proteins, it binds directly to 16S rRNA where it nucleates assembly of the head domain of the 30S subunit. Is located at the subunit interface close to the decoding center, probably blocks exit of the E-site tRNA. The chain is Small ribosomal subunit protein uS7 from Neorickettsia sennetsu (strain ATCC VR-367 / Miyayama) (Ehrlichia sennetsu).